Here is a 205-residue protein sequence, read N- to C-terminus: MFLTNGSRAGPVKERGLLIIDADHPNYDASGRGKRRRVEQEHHSDLNNETAAPTGGSAGEEIVLPFTKTLASWKEFESDEVYKRTPQRPHFPSLAYTHPSFGEPTAAYLTAAFIDCVKTVDGMCEDTPKSELDVYRETFKMFEEQGFDVAEPLSQVLTLLVLRKMRRESLRQQKGMEKEMADDYSKLKKSLVRCKSSFEDKETAK.

Positions 28–59 (DASGRGKRRRVEQEHHSDLNNETAAPTGGSAG) are disordered. A DUF724 domain is found at 63 to 189 (VLPFTKTLAS…MADDYSKLKK (127 aa)).

As to expression, expressed in roots, leaves, stems, flowers and siliques.

The protein resides in the nucleus. Functionally, may be involved in the polar growth of plant cells via transportation of RNAs. The polypeptide is DUF724 domain-containing protein 4 (Arabidopsis thaliana (Mouse-ear cress)).